The following is a 181-amino-acid chain: tRNA-splicing endonuclease (181 aa).

Catalysis depends on residues Tyr-118, His-126, and Lys-157.

This sequence belongs to the tRNA-intron endonuclease family. Archaeal short subfamily. Homotetramer; although the tetramer contains four active sites, only two participate in the cleavage. Therefore, it should be considered as a dimer of dimers.

The catalysed reaction is pretRNA = a 3'-half-tRNA molecule with a 5'-OH end + a 5'-half-tRNA molecule with a 2',3'-cyclic phosphate end + an intron with a 2',3'-cyclic phosphate and a 5'-hydroxyl terminus.. Functionally, endonuclease that removes tRNA introns. Cleaves pre-tRNA at the 5'- and 3'-splice sites to release the intron. The products are an intron and two tRNA half-molecules bearing 2',3' cyclic phosphate and 5'-OH termini. Recognizes a pseudosymmetric substrate in which 2 bulged loops of 3 bases are separated by a stem of 4 bp. In Sulfolobus acidocaldarius (strain ATCC 33909 / DSM 639 / JCM 8929 / NBRC 15157 / NCIMB 11770), this protein is tRNA-splicing endonuclease.